The primary structure comprises 514 residues: Maturase K (514 aa).

Belongs to the intron maturase 2 family. MatK subfamily.

It is found in the plastid. Its subcellular location is the chloroplast. Functionally, usually encoded in the trnK tRNA gene intron. Probably assists in splicing its own and other chloroplast group II introns. This is Maturase K from Dioon spinulosum (Gum palm).